We begin with the raw amino-acid sequence, 190 residues long: Ladderlectin (190 aa).

Residues 1-18 form the signal peptide; sequence MAMLTISLLLCAAVALNG. A C-type lectin domain is found at 60 to 179; it reads GSRCFMFVET…GNSFPSGVLQ (120 aa). A disulfide bridge connects residues Cys153 and Cys169.

Multimeric. Expressed in cells of the branchial epithelium, hepatic sinusoids, biliary epithelium, renal interstitium, skin, and sub-mucosal granular layer of the intestine. Highly expressed in caudal kidney. Moderately expressed in liver. Weakly expressed in gill, spleen, cranial kidney and skin. Isoform 1 is highly expressed in intestine. Isoform 2 is weakly expressed in intestine.

Its function is as follows. Lectin that binds sepharose in a calcium-dependent manner. This Oncorhynchus mykiss (Rainbow trout) protein is Ladderlectin.